A 724-amino-acid polypeptide reads, in one-letter code: Putative methyltransferase NSUN7 (724 aa).

Cys-444 acts as the Nucleophile in catalysis. Disordered stretches follow at residues 542-574 (KTLKRDKKRKKSKALPSRAPHHGDPLRDHLAVD), 595-629 (ISTSTKMSAPAKTVSQAGTSSQVRKPSKPLSTPLV), and 698-724 (TSSTSRRKEKVKESTTSSHVRHPRPWL). Positions 543-554 (TLKRDKKRKKSK) are enriched in basic residues. Residues 562–572 (HHGDPLRDHLA) show a composition bias toward basic and acidic residues. The segment covering 595–618 (ISTSTKMSAPAKTVSQAGTSSQVR) has biased composition (polar residues).

It belongs to the class I-like SAM-binding methyltransferase superfamily. RsmB/NOP family. In terms of tissue distribution, expressed in testis.

Functionally, may have S-adenosyl-L-methionine-dependent methyl-transferase activity. This is Putative methyltransferase NSUN7 (Nsun7) from Mus musculus (Mouse).